The sequence spans 1001 residues: Translation initiation factor IF-2 (1001 aa).

Residues 34–404 are disordered; that stretch reads KSHSSTISES…SRGDRRDRKE (371 aa). The segment covering 67–80 has biased composition (basic and acidic residues); sequence SRPESKEDKSDPKQ. Pro residues-rich tracts occupy residues 98-107, 147-157, and 163-172; these read PARPTPPPRP, PTQPLAPPPVP, and PSKPAPPTPP. The span at 173–190 shows a compositional bias: low complexity; that stretch reads AKKAAPAPRLAGPPGRTA. 2 stretches are compositionally biased toward basic and acidic residues: residues 212–230 and 238–252; these read SLKD…EEKV and PKPK…PPRP. A compositionally biased stretch (acidic residues) spans 332–342; that stretch reads DDDDDDLDIDG. 2 stretches are compositionally biased toward low complexity: residues 362–371 and 385–394; these read KSLAAKPSTP and AGSSAGGSSR. Residues 395 to 404 are compositionally biased toward basic and acidic residues; the sequence is SRGDRRDRKE. In terms of domain architecture, tr-type G spans 493-666; that stretch reads RRPPVVTIMG…LLVSEVEELV (174 aa). Positions 502-509 are G1; the sequence is GHVDHGKT. 502 to 509 is a GTP binding site; sequence GHVDHGKT. The interval 527 to 531 is G2; sequence GITQH. The G3 stretch occupies residues 552–555; it reads DTPG. GTP-binding positions include 552-556 and 606-609; these read DTPGH and NKVD. The interval 606-609 is G4; it reads NKVD. The interval 642–644 is G5; it reads SAL.

Belongs to the TRAFAC class translation factor GTPase superfamily. Classic translation factor GTPase family. IF-2 subfamily.

Its subcellular location is the cytoplasm. Functionally, one of the essential components for the initiation of protein synthesis. Protects formylmethionyl-tRNA from spontaneous hydrolysis and promotes its binding to the 30S ribosomal subunits. Also involved in the hydrolysis of GTP during the formation of the 70S ribosomal complex. The protein is Translation initiation factor IF-2 (infB) of Synechocystis sp. (strain ATCC 27184 / PCC 6803 / Kazusa).